The primary structure comprises 43 residues: Protein PsbN (43 aa).

Residues 5-27 (TLIAISISGLIVSFTGYALYTAF) form a helical membrane-spanning segment.

The protein belongs to the PsbN family.

Its subcellular location is the plastid. It localises to the chloroplast thylakoid membrane. Functionally, may play a role in photosystem I and II biogenesis. The protein is Protein PsbN of Cicer arietinum (Chickpea).